The chain runs to 84 residues: Kunitz-type serine protease inhibitor C3 (84 aa).

An N-terminal signal peptide occupies residues 1–24 (MSSGGLLLLLGLLTLWAELTPISG). The BPTI/Kunitz inhibitor domain occupies 31-81 (CYLPADPGECMAYIRSFYYDSESKKCKEFIYGGCHGNANNFPTRDKCRQTC). Cystine bridges form between Cys31–Cys81, Cys40–Cys64, and Cys56–Cys77.

Belongs to the venom Kunitz-type family. As to expression, expressed by the venom gland.

It is found in the secreted. Its function is as follows. Serine protease inhibitor. The sequence is that of Kunitz-type serine protease inhibitor C3 from Daboia siamensis (Eastern Russel's viper).